The chain runs to 93 residues: MTDVLEELSGIIAQRLREMPEGSYTASLAKKGKGYVARKVGEEAVEVVVASLSEGRERVVSETADLIYHLLVLLAMEGISLDEVRDELRRRMK.

Belongs to the PRA-PH family.

The protein localises to the cytoplasm. It catalyses the reaction 1-(5-phospho-beta-D-ribosyl)-ATP + H2O = 1-(5-phospho-beta-D-ribosyl)-5'-AMP + diphosphate + H(+). Its pathway is amino-acid biosynthesis; L-histidine biosynthesis; L-histidine from 5-phospho-alpha-D-ribose 1-diphosphate: step 2/9. The sequence is that of Phosphoribosyl-ATP pyrophosphatase from Metallosphaera sedula (strain ATCC 51363 / DSM 5348 / JCM 9185 / NBRC 15509 / TH2).